Reading from the N-terminus, the 105-residue chain is Mini zinc finger protein 2 (105 aa).

Residues 1-29 (MGPQQDRSAAKPYANGSTAAAAAAGRKEN) are disordered. A ZF-HD dimerization-type; degenerate zinc finger spans residues 35–84 (YRECQRNHAASIGGHAVDGCREFMASGADGTAAALLCAACGCHQSFHRRE).

As to quaternary structure, homo- and heterodimers.

It is found in the cytoplasm. Its function is as follows. Inhibits zinc finger homeodomain (ZHD) transcription factors, by interacting with them to prevent both their nuclear localization and their DNA-binding properties. This is Mini zinc finger protein 2 (MIF2) from Oryza sativa subsp. indica (Rice).